A 390-amino-acid polypeptide reads, in one-letter code: Olfactomedin-like protein 3A (390 aa).

An N-terminal signal peptide occupies residues 1–17 (MRALQLLVLVLSGLVGA). The stretch at 18–91 (QQQALMDYLE…RVDRVEREMD (74 aa)) forms a coiled coil. The Olfactomedin-like domain occupies 130–386 (DCSDMISSIK…QILYKLQLKK (257 aa)). Cys131 and Cys313 are disulfide-bonded. Asn169 carries an N-linked (GlcNAc...) asparagine glycan.

The protein belongs to the OLFML3 family.

Its subcellular location is the secreted. Its function is as follows. Secreted scaffold protein that plays an essential role in dorsoventral patterning during early development. Stabilizes axial formation by restricting chordin (CHRD) activity on the dorsal side. Acts by facilitating the association between the tolloid proteases and their substrate chordin (CHRD), leading to enhance chordin (CHRD) degradation. The chain is Olfactomedin-like protein 3A (olfml3a) from Danio rerio (Zebrafish).